Here is a 349-residue protein sequence, read N- to C-terminus: MITSIELRNFRNLENYKVLINKPLVIIQGLNGVGKTSILESIYFAATTKSHRSSVEKDMIQYDKPYASVKLIEDSKLHEIVLTPNGKRTTINKSEVRKISDYIGQLRVVMFAPEDLMLIKGSPSERRYFLDMELMQVSKTYLRNLNSYKKILKQRNALLKKNRNLTDYTFLNILGEQLYDVGIQIFDERQKFIEALNQKFKTIQTKYKDFEVEMLYEPNVTKENFLKHLKTKQKQDIMYETTTAGIHKDDFKLLYKGLNAKDSASQGTSRLIVIELKLALLEWIKEVTKTDAILLLDDVLSELDLERQNLFMSQLSKNHQVFITTALPINGHIDFQKIVLQEGETINAK.

29 to 36 (GLNGVGKT) serves as a coordination point for ATP.

The protein belongs to the RecF family.

The protein localises to the cytoplasm. Functionally, the RecF protein is involved in DNA metabolism; it is required for DNA replication and normal SOS inducibility. RecF binds preferentially to single-stranded, linear DNA. It also seems to bind ATP. The polypeptide is DNA replication and repair protein RecF (Acholeplasma laidlawii (strain PG-8A)).